Reading from the N-terminus, the 553-residue chain is MPTDIEIADAAKMQPITEIAQKLGLSSDDIEQYGHYKAKINLPVKEVEGKKHKLILVTGINPTSAGEGKSTVLVGLGDALNQLGHQTTIAMREPSMGPVFGIKGGATGGGYSQVVPMEDINLHFTGDMHALTSANNTLAALIDNYIMRDNVLGLDPRRIIWKRVEDVNDRVLRNVVTGLGGIMQGVPRETGFDITAASEMMAILCLSESLHNLKKRIGRIVVGYTYEKKPVTVDQLGFTGAITLLLKDAIKPNLVQTLDHTPAIIHGGPFANIAHGCNSVLATQIALKTSDYTVTECGFGADLGAEKFLDIKRPVLGETPNAVVIVATARALKLNGGADKDELTKEDIPALEKGMANLRRHVENMQKYNLPIVVAINHFNSDTEAEIKTIQDACAEMGVKAIEVDAWAKGGQGTQDLAKEVVKLADEELEFHELYKNSDSIEDKLSAIATKIYGAKRVVLSKKAKRQIKTFNEQGWNDLPVCIAKTQYSFTDDQTKLGAPTDFDFHIRDLVPKLGAGFIVALSGTMMTMPGLAKHPAAENMDIDDNGQIAGLF.

An ATP-binding site is contributed by Thr-63–Ser-70.

This sequence belongs to the formate--tetrahydrofolate ligase family.

The enzyme catalyses (6S)-5,6,7,8-tetrahydrofolate + formate + ATP = (6R)-10-formyltetrahydrofolate + ADP + phosphate. Its pathway is one-carbon metabolism; tetrahydrofolate interconversion. The polypeptide is Formate--tetrahydrofolate ligase 2 (Lactobacillus acidophilus (strain ATCC 700396 / NCK56 / N2 / NCFM)).